A 450-amino-acid polypeptide reads, in one-letter code: FAD-dependent monooxygenase okaB (450 aa).

A helical transmembrane segment spans residues 14-34 (IVIIIVGLGIAGLSAAIECHG). The FAD site is built by glutamate 43 and arginine 116. Residue arginine 194 is part of the active site. 2 residues coordinate FAD: aspartate 318 and glycine 331.

This sequence belongs to the paxM FAD-dependent monooxygenase family.

It localises to the membrane. It catalyses the reaction cyclo(N(8)-(alpha,alpha-dimethylallyl)-L-Trp-6a-(alpha,alpha-dimethylallyl)-L-Trp) + AH2 + O2 = okaramine C + A + H2O. It participates in alkaloid biosynthesis. Its function is as follows. FAD-dependent monooxygenase; part of the gene cluster that mediates the biosynthesis of okaramine B, a prenylated indole alkaloid that possesses an unusual octacyclic ring system, including a four-membered azetidine ring and an eight-membered azocine ring, and that exhibits insecticidal activity against silkworm larvae. Within the pathway, okaC performs indole 2,3-epoxidation, facilitating the formation of the hexahydropyrrolo[2,3-b]indole (HPI) moiety of okaramine C. okaC then performs asymmetric reverse prenylation of cyclo(L-Trp-L-Trp) at N-1 and C-2' of the indole ring to produce the cyclic prenylated tryptophan dimer cyclo(N8-(alpha,alpha-dimethylallyl)-L-Trp-6a-(alpha,alpha-dime-thylallyl)-L-Trp). The biosynthesis begins with the NRPS okaA that condenses two tryptophan molecules into cyclo(L-Trp-L-Trp). Prenylation by the prenyltransferase okaC then leads to the formation of cyclo(N8-(alpha,alpha-dimethylallyl)-L-Trp-6a-(alpha,alpha-dime-thylallyl)-L-Trp). This is followed by indole 2,3-epoxidation by the FAD-dependent monooxygenase okaB to facilitate the formation of the hexahydropyrrolo[2,3-b]indole (HPI) moiety of okaramine C. The cytochrome P450 monooxygenase okaD then likely catalyzes formation of the eight-membered ring of okaramine A. The dioxygenase okaE further forms the unusual 2-dimethyl-3-methyl-azetidine ring to yield 12-deshydroxyl okaramine E, as well as the hydroxylation of 12-deshydroxyl okaramine E to produce okaramine E. The cytochrome P450 monoxygenase okaG converts 12-deshydroxyl okaramine E into 3-desmethyl okaramine B which is further methylated by the methyltransferase okaF into okaramine B. In a shunt pathway, okaG and okaF together are also able to convert okaramine E into okaramine D. Okaramine H is produced by nonenzymatic conversion from okaramine A. In Penicillium ochrochloron, this protein is FAD-dependent monooxygenase okaB.